Consider the following 772-residue polypeptide: Chondroitin sulfate glucuronyltransferase (772 aa).

Residues 1–6 lie on the Cytoplasmic side of the membrane; sequence MRLSSL. The helical; Signal-anchor for type II membrane protein transmembrane segment at 7–29 threads the bilayer; it reads LALLRPALPLILGLSLGCSLSLL. The Lumenal segment spans residues 30–772; it reads RVSWIQGEGE…LFEQEQANST (743 aa). Residues N121 and N342 are each glycosylated (N-linked (GlcNAc...) asparagine). Residues 629-662 form a disordered region; the sequence is ALSPQRSPPGPPGAGPDPPSPPGADPSRGAPIGG. Residues 634–652 show a composition bias toward pro residues; that stretch reads RSPPGPPGAGPDPPSPPGA.

The protein belongs to the chondroitin N-acetylgalactosaminyltransferase family. In terms of tissue distribution, ubiquitous. Highly expressed in placenta, small intestine and pancreas.

The protein resides in the golgi apparatus. Its subcellular location is the golgi stack membrane. The catalysed reaction is 3-O-(beta-D-GalNAc-(1-&gt;4)-beta-D-GlcA-(1-&gt;3)-beta-D-Gal-(1-&gt;3)-beta-D-Gal-(1-&gt;4)-beta-D-Xyl)-L-seryl-[protein] + UDP-alpha-D-glucuronate = 3-O-(beta-D-GlcA-(1-&gt;3)-beta-D-GalNAc-(1-&gt;4)-beta-D-GlcA-(1-&gt;3)-beta-D-Gal-(1-&gt;3)-beta-D-Gal-(1-&gt;4)-beta-D-Xyl)-L-seryl-[protein] + UDP + H(+). The enzyme catalyses 3-O-{[beta-D-GalNAc-(1-&gt;4)-beta-D-GlcA-(1-&gt;3)](n)-beta-D-GalNAc-(1-&gt;4)-beta-D-GlcA-(1-&gt;3)-beta-D-Gal-(1-&gt;3)-beta-D-Gal-(1-&gt;4)-beta-D-Xyl}-L-seryl-[protein] + UDP-alpha-D-glucuronate = 3-O-{beta-D-GlcA-(1-&gt;3)-[beta-D-GalNAc-(1-&gt;4)-beta-D-GlcA-(1-&gt;3)](n)-beta-D-GalNAc-(1-&gt;4)-beta-D-GlcA-(1-&gt;3)-beta-D-Gal-(1-&gt;3)-beta-D-Gal-(1-&gt;4)-beta-D-Xyl}-L-seryl-[protein] + UDP + H(+). Transfers glucuronic acid (GlcUA) from UDP-GlcUA to N-acetylgalactosamine residues on the non-reducing end of the elongating chondroitin polymer. Has no N-acetylgalactosaminyltransferase activity. The polypeptide is Chondroitin sulfate glucuronyltransferase (CHPF2) (Homo sapiens (Human)).